Here is a 401-residue protein sequence, read N- to C-terminus: Divinyl chlorophyllide a 8-vinyl-reductase, chloroplastic (401 aa).

Residues 1-10 (MATILLSSRL) show a composition bias toward polar residues. Residues 1 to 26 (MATILLSSRLPTTGTATPSPTRPAPR) are disordered. A chloroplast-targeting transit peptide spans 1 to 54 (MATILLSSRLPTTGTATPSPTRPAPRFLSFPGTAIRRRGRGPLLASSAVSPPAP).

It localises to the plastid. The protein localises to the chloroplast. It catalyses the reaction protochlorophyllide a + NADP(+) = 3,8-divinyl protochlorophyllide a + NADPH + H(+). The protein operates within porphyrin-containing compound metabolism; chlorophyll biosynthesis. Its function is as follows. Catalyzes the conversion of divinyl chlorophyllide to monovinyl chlorophyllide. Reduces the 8-vinyl group of the tetrapyrrole to an ethyl group using NADPH as the reductant. Can use (3,8-divinyl)-chlorophyllide a (DV-Chlidea) &gt; (3,8-divinyl)-chlorophyll a (DV-Chla) &gt; (3,8-divinyl)-protochlorophyllide a (DV-Pchlidea) &gt; (3,8-divinyl)-magnesium-protoporphyrin IX monomethyl ester (DV-MPE) &gt; (3,8-divinyl)-magnesium-protoporphyrin IX (DV-Mg-Proto) as substrates. The protein is Divinyl chlorophyllide a 8-vinyl-reductase, chloroplastic (DVR) of Zea mays (Maize).